Reading from the N-terminus, the 471-residue chain is POU domain protein 2 (471 aa).

Positions 1 to 18 (CGKSYEEEEEEEDDELEA) are enriched in acidic residues. Disordered regions lie at residues 1-32 (CGKSYEEEEEEEDDELEADVAQNLSSKRSARQ) and 149-238 (DQQL…PKPL). Residues 165–180 (STPLSKSPLRSPSLSP) are compositionally biased toward low complexity. The segment covering 186 to 196 (EPQQAQRTPPN) has biased composition (polar residues). A compositionally biased stretch (low complexity) spans 197–230 (SLAAAGLGLSSAVLTPNTPSMQQQQQQTMTSTTN). The POU-specific domain maps to 257–331 (EETTDLEELE…LLQKWLEDAD (75 aa)). A DNA-binding region (homeobox) is located at residues 362–421 (RRKKRTSIETTIRGALEQAFVLNCKPTSEEINQLSERLHMDKEVVRVWFCNRRQKEKRIN).

This sequence belongs to the POU transcription factor family. Class-2 subfamily.

The protein localises to the nucleus. DNA-binding regulatory protein implicated in early development. Involved in neuronal cell fate decision. May act as an octamer-dependent activator of transcription. The chain is POU domain protein 2 (pdm2) from Drosophila virilis (Fruit fly).